Reading from the N-terminus, the 147-residue chain is Sec-independent protein translocase protein TatB (147 aa).

A helical membrane pass occupies residues 1–21 (MFDVSFTELMVIGVIALVVIG). The tract at residues 67 to 147 (DETARSMQTS…DKTPPTGSAT (81 aa)) is disordered. The span at 93–103 (AELDDTARDAS) shows a compositional bias: basic and acidic residues. Composition is skewed to low complexity over residues 109 to 120 (ADAPAEPAPAVA) and 129 to 147 (APPA…GSAT).

Belongs to the TatB family. As to quaternary structure, the Tat system comprises two distinct complexes: a TatABC complex, containing multiple copies of TatA, TatB and TatC subunits, and a separate TatA complex, containing only TatA subunits. Substrates initially bind to the TatABC complex, which probably triggers association of the separate TatA complex to form the active translocon.

The protein resides in the cell inner membrane. Functionally, part of the twin-arginine translocation (Tat) system that transports large folded proteins containing a characteristic twin-arginine motif in their signal peptide across membranes. Together with TatC, TatB is part of a receptor directly interacting with Tat signal peptides. TatB may form an oligomeric binding site that transiently accommodates folded Tat precursor proteins before their translocation. The chain is Sec-independent protein translocase protein TatB from Bordetella pertussis (strain Tohama I / ATCC BAA-589 / NCTC 13251).